A 770-amino-acid chain; its full sequence is Disabled homolog 2 (770 aa).

The span at 1–16 (MSNEVETSATNGQPDQ) shows a compositional bias: polar residues. The segment at 1-38 (MSNEVETSATNGQPDQQAAPKAPSKKEKKKGPEKTDEY) is disordered. Ser-2 is modified (N-acetylserine). Phosphoserine is present on Ser-2. Residues 45–196 (GDGVKYKAKL…KAVENGSEAL (152 aa)) form the PID domain. A Phosphotyrosine modification is found at Tyr-170. A Phosphoserine modification is found at Ser-193. The segment at 230–447 (ESKDILLVDL…KPGRGRRTAK (218 aa)) is required for localization to clathrin-coated pits. Disordered regions lie at residues 284 to 482 (LNFF…LQPN) and 604 to 629 (VSTQPPSMHSSLLVTPPQPPPRAGPP). 2 short sequence motifs (DPF) span residues 293–295 (DPF) and 298–300 (DPF). Residues 302–313 (QPDQSTPSSFDS) are compositionally biased toward polar residues. Residues Ser-326 and Ser-328 each carry the phosphoserine; in mitosis modification. A compositionally biased stretch (polar residues) spans 366-396 (FSSSQTQPAVRTQNGVSEREQNGFSVKSSPN). Ser-401 carries the phosphoserine modification. Composition is skewed to polar residues over residues 407 to 425 (SIQNGVKQDLESSVQSSPH), 466 to 480 (PSGQASPTGQPTALQ), and 604 to 616 (VSTQPPSMHSSLL). The tract at residues 604 to 732 (VSTQPPSMHS…SLPVTKSTDN (129 aa)) is sufficient for interaction with GRB2. The segment at 619–627 (PPQPPPRAG) is required for interaction with CSK. Positions 649 to 770 (KDVKEMFKDF…YRDPFGNPFA (122 aa)) are required for interaction with MYO6. The interval 663–671 (PPAVPARKG) is required for interaction with GRB2 and CSK. Residues Ser-675, Ser-723, and Ser-729 each carry the phosphoserine modification. Positions 709-725 (NKINEPPKPAPRQVSLP) are sufficient for interaction with SH3KBP1 SH3 domain. The interval 742–770 (SFGSSQASVASSQPVSSEMYRDPFGNPFA) is disordered. Low complexity predominate over residues 745-758 (SSQASVASSQPVSS).

In terms of assembly, interacts (via NPXY motif) with DAB2 (via PID domain). Can interact (via PID domain) with LDLR, APP, APLP1 and APLP2, and weakly with INPP5D (via NPXY motifs); the interaction is impaired by tyrosine phosphorylation of the respective NPXY motifs. Can weakly interact (via PID domain) with LRP1 (via NPXY motif); the interaction is enhanced by tyrosine phosphorylation of the NPXY motif. Interacts with LRP2 (via NPXY motif); the interaction is not affected by tyrosine phosphorylation of the NPXY motif. Interacts with clathrin; in vitro can assemble clathrin triskelia into polyhedral coats. Interacts with AP2A2, ITGB1, ITGB3, ITGB5, PIAS2, DAB2IP, NOSTRIN, FCHO1, DVL3, EPS15, ITSN1 and EPS15L1. Interacts with SH3KBP1 (via SH3 domains). Interacts with GRB2; competes with SOS1 for binding to GRB2 and the interaction is enhanced by EGF and NT-3 stimulation. Interacts with MAP3K7; the interaction is induced by TGF-beta stimulation and may mediate TGF-beta stimulated JNK activation. Interacts with AXIN1 and PPP1CA; the interactions are mutually exclusive. Interacts with the globular tail of MYO6. Interacts (via DPF motifs) with FCHO2; the interaction is direct and required for DAB2-mediated LDLR endocytosis. Interacts with LRP6; the interaction involves LRP6 phosphorylation by CK2 and sequesters LRP6 towards clathrin-mediated endocytosis. Associates with the TGF-beta receptor complex. Interacts with SMAD2 and SMAD3; the interactions are enhanced upon TGF-beta stimulation. Interacts with GRB2; the interaction is enhanced by EGF and NT-3 stimulation. Interacts with SRC; the interaction is enhanced by EGF stimulation. In terms of processing, phosphorylated. Phosphorylation during mitosis is leading to membrane displacement. Expressed in deep invaginations, inclusion cysts and the surface epithelial cells of the ovary. Also expressed in breast epithelial cells, spleen, thymus, prostate, testis, macrophages, fibroblasts, lung epithelial cells, placenta, brain stem, heart and small intestine. Expressed in kidney proximal tubular epithelial cells (at protein level).

Its subcellular location is the cytoplasm. It localises to the cytoplasmic vesicle. It is found in the clathrin-coated vesicle membrane. The protein resides in the membrane. The protein localises to the clathrin-coated pit. Its function is as follows. Adapter protein that functions as a clathrin-associated sorting protein (CLASP) required for clathrin-mediated endocytosis of selected cargo proteins. Can bind and assemble clathrin, and binds simultaneously to phosphatidylinositol 4,5-bisphosphate (PtdIns(4,5)P2) and cargos containing non-phosphorylated NPXY internalization motifs, such as the LDL receptor, to recruit them to clathrin-coated pits. Can function in clathrin-mediated endocytosis independently of the AP-2 complex. Involved in endocytosis of integrin beta-1; this function seems to redundant with the AP-2 complex and seems to require DAB2 binding to endocytosis accessory EH domain-containing proteins such as EPS15, EPS15L1 and ITSN1. Involved in endocytosis of cystic fibrosis transmembrane conductance regulator/CFTR. Involved in endocytosis of megalin/LRP2 lipoprotein receptor during embryonal development. Required for recycling of the TGF-beta receptor. Involved in CFTR trafficking to the late endosome. Involved in several receptor-mediated signaling pathways. Involved in TGF-beta receptor signaling and facilitates phosphorylation of the signal transducer SMAD2. Mediates TFG-beta-stimulated JNK activation. May inhibit the canoniocal Wnt/beta-catenin signaling pathway by stabilizing the beta-catenin destruction complex through a competing association with axin preventing its dephosphorylation through protein phosphatase 1 (PP1). Sequesters LRP6 towards clathrin-mediated endocytosis, leading to inhibition of Wnt/beta-catenin signaling. May activate non-canonical Wnt signaling. In cell surface growth factor/Ras signaling pathways proposed to inhibit ERK activation by interrupting the binding of GRB2 to SOS1 and to inhibit SRC by preventing its activating phosphorylation at 'Tyr-419'. Proposed to be involved in modulation of androgen receptor (AR) signaling mediated by SRC activation; seems to compete with AR for interaction with SRC. Plays a role in the CSF-1 signal transduction pathway. Plays a role in cellular differentiation. Involved in cell positioning and formation of visceral endoderm (VE) during embryogenesis and proposed to be required in the VE to respond to Nodal signaling coming from the epiblast. Required for the epithelial to mesenchymal transition, a process necessary for proper embryonic development. May be involved in myeloid cell differentiation and can induce macrophage adhesion and spreading. May act as a tumor suppressor. The protein is Disabled homolog 2 (DAB2) of Homo sapiens (Human).